The primary structure comprises 377 residues: MSRTLDYTKELIRRASVTPEDQGCQAWIIEKLEVLGFKCETLWFEEVRNLWARRGTQGPVFAFAGHTDVVPTGDVTAWKYDPFTPTEEGDLLYGRGAADMKGSIAAMIVAMEDFIAAHPDHNGSLAFLITADEEGPSVNGTVKVVEHLQARQEHIDYCLVGEPSSTNTVGDVIKNGRRGSLGAKLTVKGIQGHVAYPHLARNPIHDVAPALAELSATEWDQGNDFFPATSFQISNINGGTGATNVIPGTCEIIFNFRFSTELTDAILRERVEAILDKHGLDYDLQWTLSGQPFLTDRGALVDAAVGAIRDVTELDTELSTAGGTSDGRFIAPTGTQVVELGPTNATIHKVDEHTSISELDTLTQIYQRLLQHLMTTG.

Residue H66 coordinates Zn(2+). The active site involves D68. D99 contributes to the Zn(2+) binding site. E133 (proton acceptor) is an active-site residue. Residues E134, E162, and H348 each coordinate Zn(2+).

This sequence belongs to the peptidase M20A family. DapE subfamily. Homodimer. The cofactor is Zn(2+). Co(2+) serves as cofactor.

It carries out the reaction N-succinyl-(2S,6S)-2,6-diaminopimelate + H2O = (2S,6S)-2,6-diaminopimelate + succinate. It participates in amino-acid biosynthesis; L-lysine biosynthesis via DAP pathway; LL-2,6-diaminopimelate from (S)-tetrahydrodipicolinate (succinylase route): step 3/3. Catalyzes the hydrolysis of N-succinyl-L,L-diaminopimelic acid (SDAP), forming succinate and LL-2,6-diaminopimelate (DAP), an intermediate involved in the bacterial biosynthesis of lysine and meso-diaminopimelic acid, an essential component of bacterial cell walls. The sequence is that of Succinyl-diaminopimelate desuccinylase from Alcanivorax borkumensis (strain ATCC 700651 / DSM 11573 / NCIMB 13689 / SK2).